The chain runs to 96 residues: uncharacterized protein (96 aa).

This is an uncharacterized protein from Escherichia coli O157:H7.